A 622-amino-acid polypeptide reads, in one-letter code: MQLYDVVIIGGGHAGCEAASASARSGACTALVTHKISALGTMSCNPAIGGLGKGHLVREIDALDGLMGRAADIAGIQFRLLNRRKGPAVRGPRTQADRKLYKKAIQKFLQEQDNLILIEDEAVDLIVKDNCVSGVVLKKQGELFSGAVVLTTGTFLNGLIHIGDKTWAAGRMGEHSSVQLAERLKKYDINLGRLKTGTPARLSKKTINWNCLSKQKADEDPVPFSLLTEKIEQPQIECAITRTNTQTHQIIRENIHRSALYSGMIEGLGPRYCPSVEDKIVKFGERDGHQIFLEPEGLNDDTIYPNGLSTSLPEDVQVALLRTIEGLESVKILQPGYAIEYDFVNPQQLTKTLELRSLPGLFLAGQINGTTGYEEAAAQGLLAGLNAARKVGGLNEIIISRSTAYIGVMVDDLVSRGVSEPYRMFTSRAEFRLSLRSDNADARLTPLAQQWGIVSQKRWDLYQQKQQRLDQARSICQKLFLTPNQASAHGLQVNHDGIRRSAYDLLAYPHMSIERLSHFWQQLQSIDPKTVESLEIEAQYAVYLEKQAQDISALQRDERLEIPSSLDFQTISGLSNELKTKIQKISPRSIADAQKIDGMTPAALSLIITYIQRQRREKAESA.

10–15 (GGGHAG) provides a ligand contact to FAD. 269–283 (GPRYCPSVEDKIVKF) provides a ligand contact to NAD(+).

The protein belongs to the MnmG family. In terms of assembly, homodimer. Heterotetramer of two MnmE and two MnmG subunits. The cofactor is FAD.

It localises to the cytoplasm. In terms of biological role, NAD-binding protein involved in the addition of a carboxymethylaminomethyl (cmnm) group at the wobble position (U34) of certain tRNAs, forming tRNA-cmnm(5)s(2)U34. The chain is tRNA uridine 5-carboxymethylaminomethyl modification enzyme MnmG from Bartonella quintana (strain Toulouse) (Rochalimaea quintana).